Reading from the N-terminus, the 214-residue chain is Protein-L-isoaspartate O-methyltransferase (214 aa).

Residue Ser63 is part of the active site.

It belongs to the methyltransferase superfamily. L-isoaspartyl/D-aspartyl protein methyltransferase family.

The protein resides in the cytoplasm. It catalyses the reaction [protein]-L-isoaspartate + S-adenosyl-L-methionine = [protein]-L-isoaspartate alpha-methyl ester + S-adenosyl-L-homocysteine. Functionally, catalyzes the methyl esterification of L-isoaspartyl residues in peptides and proteins that result from spontaneous decomposition of normal L-aspartyl and L-asparaginyl residues. It plays a role in the repair and/or degradation of damaged proteins. This chain is Protein-L-isoaspartate O-methyltransferase, found in Desulfotalea psychrophila (strain LSv54 / DSM 12343).